The primary structure comprises 227 residues: MSERTPIVTIDGPSGVGKGTISQLLAQHLGWHLLDSGAIYRVLALAAIHHDVELENEEAITLLAAHLDVQFLSDADGKGIKVILEGEDVTSSIRSQECSNAASKVAALPRVREALLRRQRAFSTAPGLIADGRDMGTVVFPKAAAKIFLIASAQERAQRRYNQLQDKGFDVNIDRLLAEIIERDERDTNRAASPLKPADDALVIDTSGIGINEVFERVLEHVKASIS.

12-20 (GPSGVGKGT) contributes to the ATP binding site.

It belongs to the cytidylate kinase family. Type 1 subfamily.

It is found in the cytoplasm. The catalysed reaction is CMP + ATP = CDP + ADP. It catalyses the reaction dCMP + ATP = dCDP + ADP. The sequence is that of Cytidylate kinase from Shewanella denitrificans (strain OS217 / ATCC BAA-1090 / DSM 15013).